Here is a 158-residue protein sequence, read N- to C-terminus: Ribosome maturation factor RimP (158 aa).

Belongs to the RimP family.

It is found in the cytoplasm. Functionally, required for maturation of 30S ribosomal subunits. The polypeptide is Ribosome maturation factor RimP (Streptococcus uberis (strain ATCC BAA-854 / 0140J)).